A 1620-amino-acid chain; its full sequence is NAD-specific glutamate dehydrogenase (1620 aa).

Lys851 is a catalytic residue.

It belongs to the Glu/Leu/Phe/Val dehydrogenases family. In terms of assembly, homotetramer. Post-translationally, contains disulfide bonds (interchain).

The catalysed reaction is L-glutamate + NAD(+) + H2O = 2-oxoglutarate + NH4(+) + NADH + H(+). With respect to regulation, activity subject to allosteric control by arginine and citrate, which function as positive and negative effectors, respectively. Functionally, involved in arginine catabolism by converting L-glutamate, into 2-oxoglutarate, which is then channeled into the tricarboxylic acid cycle. Can also utilize other amino acids of the glutamate family. This chain is NAD-specific glutamate dehydrogenase (gdhB), found in Pseudomonas aeruginosa (strain ATCC 15692 / DSM 22644 / CIP 104116 / JCM 14847 / LMG 12228 / 1C / PRS 101 / PAO1).